The sequence spans 57 residues: Large ribosomal subunit protein bL32 (57 aa).

The segment covering 1-19 (MATPKRRMSRANTRSRRAQ) has biased composition (basic residues). Residues 1–20 (MATPKRRMSRANTRSRRAQW) form a disordered region.

The protein belongs to the bacterial ribosomal protein bL32 family.

The polypeptide is Large ribosomal subunit protein bL32 (Mycobacterium leprae (strain Br4923)).